The following is a 55-amino-acid chain: Large ribosomal subunit protein bL33 (55 aa).

This sequence belongs to the bacterial ribosomal protein bL33 family.

The protein is Large ribosomal subunit protein bL33 of Methylocella silvestris (strain DSM 15510 / CIP 108128 / LMG 27833 / NCIMB 13906 / BL2).